The primary structure comprises 431 residues: Galactose-3-O-sulfotransferase 3 (431 aa).

The Cytoplasmic portion of the chain corresponds to 1–19 (MPPILQRLQQATKMMSRRK). Residues 20 to 40 (ILLLVLGCSTVSLLIHQGAQL) form a helical; Signal-anchor for type II membrane protein membrane-spanning segment. The Lumenal segment spans residues 41 to 431 (SWYPKLFPLS…RVLPRGPQGP (391 aa)). N-linked (GlcNAc...) asparagine glycans are attached at residues asparagine 91, asparagine 110, asparagine 177, and asparagine 302. Residues 399–431 (QKRRGGARARPEPVLDNPPPRPIRVLPRGPQGP) are disordered.

The protein belongs to the galactose-3-O-sulfotransferase family. It depends on Mg(2+) as a cofactor. As to expression, highly expressed in thyroid, brain, kidney, heart and spinal cord.

The protein localises to the golgi apparatus. It localises to the golgi stack membrane. Its pathway is protein modification; carbohydrate sulfation. Functionally, transfers a sulfate to position 3 of non-reducing beta-galactosyl residues in N-glycans and core2-branched O-glycans. Has high activity towards Gal-beta-1,4-GlcNAc, Gal-beta-1,4(Fuc-alpha-1,3)GlcNAc and lower activity towards Gal-beta-1,3(Fuc-alpha-1,4)GlcNAc. The polypeptide is Galactose-3-O-sulfotransferase 3 (GAL3ST3) (Homo sapiens (Human)).